The primary structure comprises 95 residues: Osteocalcin 1 (95 aa).

The first 21 residues, 1–21, serve as a signal peptide directing secretion; it reads MKTLSVLVLCSLAVLCLTSDA. The propeptide occupies 22–50; it reads SFSSQPAVDTPAQEGLFVEQEQASSVVRQ. A Gla domain is found at 45-91; it reads SSVVRQAPKELSLSQLESLREVCELNLACEDMMDTSGIIAAYTTYYG. Ca(2+)-binding residues include E61, E65, and E68. 3 positions are modified to 4-carboxyglutamate: E61, E65, and E68. C67 and C73 are joined by a disulfide.

Belongs to the osteocalcin/matrix Gla protein family. Post-translationally, gamma-carboxyglutamate residues are formed by vitamin K dependent carboxylation by GGCX. These residues are essential for the binding of calcium.

The protein localises to the secreted. Its function is as follows. The carboxylated form is one of the main organic components of the bone matrix, which constitutes 1-2% of the total bone protein. The carboxylated form binds strongly to apatite and calcium. In Solea senegalensis (Senegalese sole), this protein is Osteocalcin 1.